The following is a 437-amino-acid chain: Kynureninase (437 aa).

Pyridoxal 5'-phosphate-binding positions include L99, T100, 127 to 130 (FPSD), S183, D212, H215, and Y237. K238 carries the N6-(pyridoxal phosphate)lysine modification. Pyridoxal 5'-phosphate contacts are provided by W267 and N295.

This sequence belongs to the kynureninase family. Homodimer. Pyridoxal 5'-phosphate serves as cofactor.

It is found in the cytoplasm. The catalysed reaction is L-kynurenine + H2O = anthranilate + L-alanine + H(+). It catalyses the reaction 3-hydroxy-L-kynurenine + H2O = 3-hydroxyanthranilate + L-alanine + H(+). Its pathway is amino-acid degradation; L-kynurenine degradation; L-alanine and anthranilate from L-kynurenine: step 1/1. It functions in the pathway cofactor biosynthesis; NAD(+) biosynthesis; quinolinate from L-kynurenine: step 2/3. Its function is as follows. Catalyzes the cleavage of L-kynurenine (L-Kyn) and L-3-hydroxykynurenine (L-3OHKyn) into anthranilic acid (AA) and 3-hydroxyanthranilic acid (3-OHAA), respectively. This chain is Kynureninase, found in Yarrowia lipolytica (strain CLIB 122 / E 150) (Yeast).